Consider the following 432-residue polypeptide: Trigger factor (432 aa).

The 86-residue stretch at 161–246 folds into the PPIase FKBP-type domain; that stretch reads EDRVTIDFTG…LKKVEERELP (86 aa).

This sequence belongs to the FKBP-type PPIase family. Tig subfamily.

It is found in the cytoplasm. The enzyme catalyses [protein]-peptidylproline (omega=180) = [protein]-peptidylproline (omega=0). In terms of biological role, involved in protein export. Acts as a chaperone by maintaining the newly synthesized protein in an open conformation. Functions as a peptidyl-prolyl cis-trans isomerase. The protein is Trigger factor of Citrobacter koseri (strain ATCC BAA-895 / CDC 4225-83 / SGSC4696).